Consider the following 455-residue polypeptide: SVGFKAGVKDYKLTYYTPDYKTKDTDILAAFRVTPQPGVPPEEAGAAVAAESSTGTWTTVWTDGLTSLDRYKGRCYHIEPVAGEESQFIAYVAYPLDLFEEGSVTNMFTSIVGNVFGFKALRALRLEDLRIPNAYVKTFQGPPHGIQVERDKLNKYGRPLLGCTIKPKLGLSAKNYGRAVYECLRGGLDFTKDDENVNSQPFMRWRDRFLFCAEALYKAQAETGEIKGHYLNATAGTCEEMIKRAVFARELGVPIVMHDYLTGGFTANTTLAHYCRDNGLLLHIHRAMHAVIDRQKNHGMHFRVLAKALRLSGGDHIHSGTVVGKLEGEREITLGFVDLLRDDFVEKDRSRGIYFTQDWVSLPGVLPVASGGIHVWHMPALTEIFGDDSVLQFGGGTLGHPWGNAPGAVANRVALEACVQARNEGRDLASEGNQIIREASKWSPELAAACEVWKE.

N6,N6,N6-trimethyllysine is present on Lys5. 2 residues coordinate substrate: Asn114 and Thr164. Lys166 acts as the Proton acceptor in catalysis. Lys168 is a substrate binding site. Residues Lys192, Asp194, and Glu195 each contribute to the Mg(2+) site. Lys192 carries the N6-carboxylysine modification. The active-site Proton acceptor is His285. Substrate-binding residues include Arg286, His318, and Ser370.

The protein belongs to the RuBisCO large chain family. Type I subfamily. Heterohexadecamer of 8 large chains and 8 small chains; disulfide-linked. The disulfide link is formed within the large subunit homodimers. Mg(2+) is required as a cofactor. In terms of processing, the disulfide bond which can form in the large chain dimeric partners within the hexadecamer appears to be associated with oxidative stress and protein turnover.

It localises to the plastid. The protein resides in the chloroplast. The catalysed reaction is 2 (2R)-3-phosphoglycerate + 2 H(+) = D-ribulose 1,5-bisphosphate + CO2 + H2O. The enzyme catalyses D-ribulose 1,5-bisphosphate + O2 = 2-phosphoglycolate + (2R)-3-phosphoglycerate + 2 H(+). Its function is as follows. RuBisCO catalyzes two reactions: the carboxylation of D-ribulose 1,5-bisphosphate, the primary event in carbon dioxide fixation, as well as the oxidative fragmentation of the pentose substrate in the photorespiration process. Both reactions occur simultaneously and in competition at the same active site. The protein is Ribulose bisphosphate carboxylase large chain of Lupinus latifolius (Broad-leaved lupine).